A 326-amino-acid polypeptide reads, in one-letter code: Beta-ketoacyl-[acyl-carrier-protein] synthase III (326 aa).

Active-site residues include C111 and H252. Residues 253–257 (QANIR) are ACP-binding. N282 is a catalytic residue.

The protein belongs to the thiolase-like superfamily. FabH family. In terms of assembly, homodimer.

It is found in the plastid. It localises to the chloroplast. The enzyme catalyses malonyl-[ACP] + acetyl-CoA + H(+) = 3-oxobutanoyl-[ACP] + CO2 + CoA. The protein operates within lipid metabolism; fatty acid biosynthesis. Catalyzes the condensation reaction of fatty acid synthesis by the addition to an acyl acceptor of two carbons from malonyl-ACP. Catalyzes the first condensation reaction which initiates fatty acid synthesis and may therefore play a role in governing the total rate of fatty acid production. Possesses both acetoacetyl-ACP synthase and acetyl transacylase activities. Its substrate specificity determines the biosynthesis of branched-chain and/or straight-chain of fatty acids. The sequence is that of Beta-ketoacyl-[acyl-carrier-protein] synthase III from Porphyra umbilicalis (Purple laver).